The sequence spans 93 residues: Cell division protein FtsB (93 aa).

Residues 1-3 (MRI) lie on the Cytoplasmic side of the membrane. A helical transmembrane segment spans residues 4 to 21 (FVIALTLLFGWLQYTLWF). Topologically, residues 22–93 (GKNGVSDYYT…FYRIVDEEEH (72 aa)) are periplasmic. A coiled-coil region spans residues 31–75 (TVEDEIEVQQQVNSKLQARNNEMFAEIDDLRQGLDAIEERARHEL).

The protein belongs to the FtsB family. Part of a complex composed of FtsB, FtsL and FtsQ.

It is found in the cell inner membrane. Its function is as follows. Essential cell division protein. May link together the upstream cell division proteins, which are predominantly cytoplasmic, with the downstream cell division proteins, which are predominantly periplasmic. The chain is Cell division protein FtsB from Vibrio campbellii (strain ATCC BAA-1116).